The primary structure comprises 387 residues: Postreplication repair E3 ubiquitin-protein ligase rad18 (387 aa).

An RING-type zinc finger spans residues 29 to 67 (CLICHEYFRAPLITSCSHTFCSFCIRDYLREHPMCPACR). A disordered region spans residues 119 to 153 (DSASGDEEWEDDLASNSSPASIAKKTSRDSKKRKR). Residues 122-131 (SGDEEWEDDL) are compositionally biased toward acidic residues. The UBZ4-type zinc finger occupies 156–183 (LVHCPACSNLVPHNQINQHLDSCLNSPS). Zn(2+) is bound by residues Cys159, Cys162, His174, and Cys178. The tract at residues 174-206 (HLDSCLNSPSSPSSSSSPYKNKDNSKSNSLLSF) is disordered. Low complexity predominate over residues 177–192 (SCLNSPSSPSSSSSPY). One can recognise an SAP domain in the interval 240–274 (YALLSESKIRSKLSEMGLPTDGHKQLLQRRHAKWV). The tract at residues 335–387 (KQSTTNKNDSLRNTAVESSTEPSTSNGFPATSVSPPLTIDLTNSQTGSDGPQS) is disordered.

It belongs to the RAD18 family. In terms of assembly, interacts with E2 ubc2, forming a complex with ubiquitin ligase activity.

Its subcellular location is the nucleus. It catalyses the reaction S-ubiquitinyl-[E2 ubiquitin-conjugating enzyme]-L-cysteine + [acceptor protein]-L-lysine = [E2 ubiquitin-conjugating enzyme]-L-cysteine + N(6)-ubiquitinyl-[acceptor protein]-L-lysine.. It participates in protein modification; protein ubiquitination. In terms of biological role, E3 RING-finger protein, member of the UBC2/RAD6 epistasis group. Associates to the E2 ubiquitin conjugating enzyme ubc2/rad6 to form the ubc2-rad18 ubiquitin ligase complex involved in postreplicative repair (PRR) of damaged DNA. This is Postreplication repair E3 ubiquitin-protein ligase rad18 (rhp18) from Schizosaccharomyces pombe (strain 972 / ATCC 24843) (Fission yeast).